The sequence spans 120 residues: MFLLTGYEYFLGFLLIAAAVPVLALVTNLIVAPKGRTGERKLTYESGMEPIGGAWIQFNIRYYMFALVFVIFDVETVFLYPWAVAFNRLGLLAFIEALIFIAILVIALAYAWRKGALEWS.

The next 3 helical transmembrane spans lie at 10 to 30 (FLGFLLIAAAVPVLALVTNLI), 64 to 84 (MFALVFVIFDVETVFLYPWAV), and 89 to 109 (LGLLAFIEALIFIAILVIALA).

This sequence belongs to the complex I subunit 3 family. NDH-1 can be composed of about 15 different subunits; different subcomplexes with different compositions have been identified which probably have different functions.

Its subcellular location is the cellular thylakoid membrane. It catalyses the reaction a plastoquinone + NADH + (n+1) H(+)(in) = a plastoquinol + NAD(+) + n H(+)(out). It carries out the reaction a plastoquinone + NADPH + (n+1) H(+)(in) = a plastoquinol + NADP(+) + n H(+)(out). Its function is as follows. NDH-1 shuttles electrons from an unknown electron donor, via FMN and iron-sulfur (Fe-S) centers, to quinones in the respiratory and/or the photosynthetic chain. The immediate electron acceptor for the enzyme in this species is believed to be plastoquinone. Couples the redox reaction to proton translocation, and thus conserves the redox energy in a proton gradient. Cyanobacterial NDH-1 also plays a role in inorganic carbon-concentration. The sequence is that of NAD(P)H-quinone oxidoreductase subunit 3 from Prochlorococcus marinus (strain AS9601).